The primary structure comprises 158 residues: Crossover junction endodeoxyribonuclease RuvC (158 aa).

Residues Asp-7, Glu-66, and Asp-139 contribute to the active site. Residues Asp-7, Glu-66, and Asp-139 each coordinate Mg(2+).

It belongs to the RuvC family. In terms of assembly, homodimer which binds Holliday junction (HJ) DNA. The HJ becomes 2-fold symmetrical on binding to RuvC with unstacked arms; it has a different conformation from HJ DNA in complex with RuvA. In the full resolvosome a probable DNA-RuvA(4)-RuvB(12)-RuvC(2) complex forms which resolves the HJ. It depends on Mg(2+) as a cofactor.

It localises to the cytoplasm. It carries out the reaction Endonucleolytic cleavage at a junction such as a reciprocal single-stranded crossover between two homologous DNA duplexes (Holliday junction).. In terms of biological role, the RuvA-RuvB-RuvC complex processes Holliday junction (HJ) DNA during genetic recombination and DNA repair. Endonuclease that resolves HJ intermediates. Cleaves cruciform DNA by making single-stranded nicks across the HJ at symmetrical positions within the homologous arms, yielding a 5'-phosphate and a 3'-hydroxyl group; requires a central core of homology in the junction. The consensus cleavage sequence is 5'-(A/T)TT(C/G)-3'. Cleavage occurs on the 3'-side of the TT dinucleotide at the point of strand exchange. HJ branch migration catalyzed by RuvA-RuvB allows RuvC to scan DNA until it finds its consensus sequence, where it cleaves and resolves the cruciform DNA. This Campylobacter lari (strain RM2100 / D67 / ATCC BAA-1060) protein is Crossover junction endodeoxyribonuclease RuvC.